A 176-amino-acid chain; its full sequence is Transcription factor 21 (176 aa).

Residues 1-84 (MSTGSISDVD…QVQRNAANAR (84 aa)) are disordered. Polar residues predominate over residues 31-44 (GTSNESTEDSSNCE). The region spanning 76-128 (VQRNAANARERARMRVLSKAFSRLKTTLPWVPPDTKLSKLDTLRLASSYIAHL) is the bHLH domain.

In terms of assembly, efficient DNA binding requires dimerization with another bHLH protein. In terms of tissue distribution, expressed in the cranial paraxial mesoderm from 20 hpf and subsequently becomes restricted to the pharyngeal mesoderm that will form the muscle. Expression in the proepicardial organ is first seen at 40hpf in a cluster of cells between the myocardium and yolk. Also expressed in the developing arches. Expression begins to surround the heart by day 3 of development, and by 96 hpf, expression is restricted to the outer epicardial layer surrounding the myocardium.

Its subcellular location is the nucleus. Its function is as follows. Involved in epithelial-mesenchymal interactions in kidney and lung morphogenesis that include epithelial differentiation and branching morphogenesis. This Danio rerio (Zebrafish) protein is Transcription factor 21.